A 138-amino-acid chain; its full sequence is ATP synthase epsilon chain (138 aa).

Belongs to the ATPase epsilon chain family. F-type ATPases have 2 components, CF(1) - the catalytic core - and CF(0) - the membrane proton channel. CF(1) has five subunits: alpha(3), beta(3), gamma(1), delta(1), epsilon(1). CF(0) has three main subunits: a, b and c.

The protein localises to the cell inner membrane. In terms of biological role, produces ATP from ADP in the presence of a proton gradient across the membrane. This Cupriavidus necator (strain ATCC 17699 / DSM 428 / KCTC 22496 / NCIMB 10442 / H16 / Stanier 337) (Ralstonia eutropha) protein is ATP synthase epsilon chain.